A 103-amino-acid chain; its full sequence is Protamine-3 (103 aa).

The segment at 1 to 103 is disordered; the sequence is MGSRCAKLNT…QSPEPKRTPS (103 aa). Over residues 10-21 the composition is skewed to low complexity; it reads TGQSPGHSPGHS. Acidic residues predominate over residues 50-66; sequence GEEEEEEEEEGEEEEKE. Over residues 78 to 90 the composition is skewed to basic and acidic residues; that stretch reads EPERQEEGHKDNA. Serine 95 is modified (phosphoserine).

Belongs to the protamine P3 family.

The protein localises to the nucleus. It localises to the chromosome. Its function is as follows. Protamines substitute for histones in the chromatin of sperm during the haploid phase of spermatogenesis. They compact sperm DNA into a highly condensed, stable and inactive complex. The chain is Protamine-3 (PRM3) from Homo sapiens (Human).